The chain runs to 290 residues: MIETKPIDGKAFAAGLRARIAEEVAVLVRDHDLKPGLAVVLVGEDPASQVYVRNKAAQTAEAGMASFEYKLPADTAEADLLALVEKLNADPAVNGILVQLPLPAHLDSMKVLAAIDPAKDVDGFHVVNAGRLAVGLDALVPCTPLGCVMLLKHHLGNLSGLNAVVVGRSNIVGKPAAQLLLREDCTVTIAHSRTRDLPGMCRQADILVAAVGRPEMVRGDWIKPGATVIDVGINRVPKADGKTRLVGDVAYEEALGVAGLITPVPGGVGPMTIACLLQNTLTAARRQKGL.

Residues 167-169 (GRS), S192, and I233 each bind NADP(+).

This sequence belongs to the tetrahydrofolate dehydrogenase/cyclohydrolase family. In terms of assembly, homodimer.

It carries out the reaction (6R)-5,10-methylene-5,6,7,8-tetrahydrofolate + NADP(+) = (6R)-5,10-methenyltetrahydrofolate + NADPH. The catalysed reaction is (6R)-5,10-methenyltetrahydrofolate + H2O = (6R)-10-formyltetrahydrofolate + H(+). It participates in one-carbon metabolism; tetrahydrofolate interconversion. In terms of biological role, catalyzes the oxidation of 5,10-methylenetetrahydrofolate to 5,10-methenyltetrahydrofolate and then the hydrolysis of 5,10-methenyltetrahydrofolate to 10-formyltetrahydrofolate. This chain is Bifunctional protein FolD, found in Azorhizobium caulinodans (strain ATCC 43989 / DSM 5975 / JCM 20966 / LMG 6465 / NBRC 14845 / NCIMB 13405 / ORS 571).